Reading from the N-terminus, the 419-residue chain is Enolase (419 aa).

Gln161 contributes to the (2R)-2-phosphoglycerate binding site. The Proton donor role is filled by Glu205. Mg(2+) contacts are provided by Asp240, Glu283, and Asp309. (2R)-2-phosphoglycerate-binding residues include Lys334, Arg363, Ser364, and Lys385. The active-site Proton acceptor is Lys334.

The protein belongs to the enolase family. The cofactor is Mg(2+).

It localises to the cytoplasm. Its subcellular location is the secreted. The protein resides in the cell surface. The catalysed reaction is (2R)-2-phosphoglycerate = phosphoenolpyruvate + H2O. It participates in carbohydrate degradation; glycolysis; pyruvate from D-glyceraldehyde 3-phosphate: step 4/5. In terms of biological role, catalyzes the reversible conversion of 2-phosphoglycerate (2-PG) into phosphoenolpyruvate (PEP). It is essential for the degradation of carbohydrates via glycolysis. The sequence is that of Enolase from Saccharolobus solfataricus (strain ATCC 35092 / DSM 1617 / JCM 11322 / P2) (Sulfolobus solfataricus).